A 251-amino-acid polypeptide reads, in one-letter code: Core protein VP8 (251 aa).

The propeptide at 1–32 is removed by core protease OPG083; the sequence is MSLLLENLIEEDTIFFAGSISEYDDLQMVIAG.

The protein belongs to the orthopoxvirus OPG098 family. Undergoes morphogenesis-associated proteolysis which cleaves the 28 kDa to a 25-kDa product. Proteolytic cleavage of major core proteins P4a (OPG136), P4b (OPG129), and VP8 (OPG098), which occurs at a late stage of core formation, is required for production of infectious mature virions (MV).

It localises to the virion. Its subcellular location is the host cytoplasm. Its function is as follows. Major core structural protein. This Monkeypox virus protein is Core protein VP8 (OPG098).